Reading from the N-terminus, the 1508-residue chain is DNA-directed RNA polymerase subunit beta' (1508 aa).

Positions 71, 73, 86, and 89 each coordinate Zn(2+). Positions 470, 472, and 474 each coordinate Mg(2+). Zn(2+)-binding residues include C804, C878, C885, and C888.

It belongs to the RNA polymerase beta' chain family. In terms of assembly, the RNAP catalytic core consists of 2 alpha, 1 beta, 1 beta' and 1 omega subunit. When a sigma factor is associated with the core the holoenzyme is formed, which can initiate transcription. The cofactor is Mg(2+). It depends on Zn(2+) as a cofactor.

It carries out the reaction RNA(n) + a ribonucleoside 5'-triphosphate = RNA(n+1) + diphosphate. Its function is as follows. DNA-dependent RNA polymerase catalyzes the transcription of DNA into RNA using the four ribonucleoside triphosphates as substrates. This Campylobacter fetus subsp. fetus (strain 82-40) protein is DNA-directed RNA polymerase subunit beta'.